The following is a 132-amino-acid chain: Small ribosomal subunit protein uS8 (132 aa).

This sequence belongs to the universal ribosomal protein uS8 family. Part of the 30S ribosomal subunit. Contacts proteins S5 and S12.

Its function is as follows. One of the primary rRNA binding proteins, it binds directly to 16S rRNA central domain where it helps coordinate assembly of the platform of the 30S subunit. The sequence is that of Small ribosomal subunit protein uS8 from Latilactobacillus sakei subsp. sakei (strain 23K) (Lactobacillus sakei subsp. sakei).